The following is a 359-amino-acid chain: Ornithine carbamoyltransferase, mitochondrial (359 aa).

A mitochondrion-targeting transit peptide spans M1 to T24. Carbamoyl phosphate is bound by residues S87–T90, R138, H165, and Q168. 4 residues coordinate L-ornithine: N205, D271, S275, and M276. Residue C313 is the Proton acceptor of the active site. Residues C313 to L314 and R340 contribute to the carbamoyl phosphate site.

This sequence belongs to the aspartate/ornithine carbamoyltransferase superfamily. OTCase family. As to quaternary structure, homotrimer.

Its subcellular location is the mitochondrion matrix. The enzyme catalyses carbamoyl phosphate + L-ornithine = L-citrulline + phosphate + H(+). It functions in the pathway amino-acid biosynthesis; L-arginine biosynthesis; L-arginine from L-ornithine and carbamoyl phosphate: step 1/3. This chain is Ornithine carbamoyltransferase, mitochondrial (argB), found in Emericella nidulans (strain FGSC A4 / ATCC 38163 / CBS 112.46 / NRRL 194 / M139) (Aspergillus nidulans).